The primary structure comprises 77 residues: Conotoxin Bt6.6 (77 aa).

The first 19 residues, 1–19 (MEKLTILLLVAAVLMSTQA), serve as a signal peptide directing secretion. Residues 20–38 (LIQSDGEKRQQAKINFLSX) constitute a propeptide that is removed on maturation. Cystine bridges form between Cys51–Cys65, Cys58–Cys69, and Cys64–Cys74.

Belongs to the conotoxin O2 superfamily. Expressed by the venom duct.

It is found in the secreted. The protein is Conotoxin Bt6.6 of Conus betulinus (Beech cone).